A 429-amino-acid chain; its full sequence is Glutamate-1-semialdehyde 2,1-aminomutase (429 aa).

Lys-267 carries the post-translational modification N6-(pyridoxal phosphate)lysine.

It belongs to the class-III pyridoxal-phosphate-dependent aminotransferase family. HemL subfamily. Homodimer. Pyridoxal 5'-phosphate serves as cofactor.

The protein resides in the cytoplasm. It carries out the reaction (S)-4-amino-5-oxopentanoate = 5-aminolevulinate. Its pathway is porphyrin-containing compound metabolism; protoporphyrin-IX biosynthesis; 5-aminolevulinate from L-glutamyl-tRNA(Glu): step 2/2. The polypeptide is Glutamate-1-semialdehyde 2,1-aminomutase (Xanthomonas oryzae pv. oryzae (strain PXO99A)).